The primary structure comprises 804 residues: Leucine--tRNA ligase (804 aa).

Positions 40-51 match the 'HIGH' region motif; that stretch reads PYPSGAGLHVGH. The 'KMSKS' region motif lies at 576-580; sequence KMSKS. Lys-579 is an ATP binding site.

This sequence belongs to the class-I aminoacyl-tRNA synthetase family.

It is found in the cytoplasm. The catalysed reaction is tRNA(Leu) + L-leucine + ATP = L-leucyl-tRNA(Leu) + AMP + diphosphate. The protein is Leucine--tRNA ligase of Bacillus licheniformis (strain ATCC 14580 / DSM 13 / JCM 2505 / CCUG 7422 / NBRC 12200 / NCIMB 9375 / NCTC 10341 / NRRL NRS-1264 / Gibson 46).